Reading from the N-terminus, the 650-residue chain is Acetyl-coenzyme A synthetase (650 aa).

Residues 191-194, Thr311, and Asn335 each bind CoA; that span reads RGGR. ATP is bound by residues 387–389, 411–416, Asp500, and Arg515; these read GEP and DTWWQT. Ser523 is a binding site for CoA. Arg526 lines the ATP pocket. Residues Val537, His539, and Val542 each coordinate Mg(2+). Arg584 is a CoA binding site. Lys609 bears the N6-acetyllysine mark.

It belongs to the ATP-dependent AMP-binding enzyme family. Requires Mg(2+) as cofactor. Post-translationally, acetylated. Deacetylation by the SIR2-homolog deacetylase activates the enzyme.

It catalyses the reaction acetate + ATP + CoA = acetyl-CoA + AMP + diphosphate. Its function is as follows. Catalyzes the conversion of acetate into acetyl-CoA (AcCoA), an essential intermediate at the junction of anabolic and catabolic pathways. AcsA undergoes a two-step reaction. In the first half reaction, AcsA combines acetate with ATP to form acetyl-adenylate (AcAMP) intermediate. In the second half reaction, it can then transfer the acetyl group from AcAMP to the sulfhydryl group of CoA, forming the product AcCoA. This chain is Acetyl-coenzyme A synthetase, found in Shewanella sp. (strain MR-7).